A 294-amino-acid polypeptide reads, in one-letter code: Beta-glucoside kinase (294 aa).

5-11 (AFDIGGT) lines the ATP pocket.

The protein belongs to the ROK (NagC/XylR) family.

The catalysed reaction is D-cellobiose + ATP = 6-phospho-beta-D-glucosyl-(1-&gt;4)-D-glucose + ADP + H(+). Functionally, catalyzes the ATP-dependent phosphorylation of cellobiose to produce cellobiose-6'-P. May have a dual role of kinase and transcriptional regulator of the cellobiose-PTS operon. The chain is Beta-glucoside kinase (bglK) from Listeria innocua serovar 6a (strain ATCC BAA-680 / CLIP 11262).